The primary structure comprises 316 residues: Adenine deaminase (316 aa).

The Zn(2+) site is built by histidine 14, histidine 16, and histidine 194. Catalysis depends on glutamate 197, which acts as the Proton donor. Aspartate 275 contributes to the Zn(2+) binding site. Position 276 (aspartate 276) interacts with substrate.

It belongs to the metallo-dependent hydrolases superfamily. Adenosine and AMP deaminases family. Adenine deaminase type 2 subfamily. Zn(2+) serves as cofactor.

The enzyme catalyses adenine + H2O + H(+) = hypoxanthine + NH4(+). In terms of biological role, catalyzes the hydrolytic deamination of adenine to hypoxanthine. Plays an important role in the purine salvage pathway and in nitrogen catabolism. This is Adenine deaminase from Pseudomonas aeruginosa (strain UCBPP-PA14).